The primary structure comprises 132 residues: Small ribosomal subunit protein uS8 (132 aa).

The protein belongs to the universal ribosomal protein uS8 family. As to quaternary structure, part of the 30S ribosomal subunit. Contacts proteins S5 and S12.

Its function is as follows. One of the primary rRNA binding proteins, it binds directly to 16S rRNA central domain where it helps coordinate assembly of the platform of the 30S subunit. This chain is Small ribosomal subunit protein uS8, found in Xylella fastidiosa (strain M23).